The chain runs to 117 residues: Small ribosomal subunit protein bS6 (117 aa).

Positions 96 to 117 (HAEGPSVQMQKRDERDSRRERR) are disordered. Over residues 105-117 (QKRDERDSRRERR) the composition is skewed to basic and acidic residues.

The protein belongs to the bacterial ribosomal protein bS6 family.

Its function is as follows. Binds together with bS18 to 16S ribosomal RNA. This Ruegeria pomeroyi (strain ATCC 700808 / DSM 15171 / DSS-3) (Silicibacter pomeroyi) protein is Small ribosomal subunit protein bS6.